The primary structure comprises 3767 residues: Transmembrane cell adhesion receptor mua-3 (3767 aa).

The N-terminal stretch at 1–24 (MQAGISIFFLFLHIPIFFVNCSNS) is a signal peptide. The Extracellular segment spans residues 25 to 3417 (TSCVAREEFQ…CQVAPSNASL (3393 aa)). In terms of domain architecture, LDL-receptor class A 1 spans 26–63 (SCVAREEFQCKMDDSCISMKKWQDGVDDCYDGSDEVCL). 10 disulfides stabilise this stretch: C27/C41, C35/C54, C62/C76, C69/C89, C97/C110, C104/C123, C131/C144, C138/C157, C165/C179, and C172/C192. LDL-receptor class A domains follow at residues 96 to 132 (GCPA…EPCA), 133 to 166 (QNQF…EECT), and 167 to 209 (TSQF…ANCT). Residues N201 and N207 are each glycosylated (N-linked (GlcNAc...) asparagine). 17 EGF-like domains span residues 225–268 (KLKF…DKCI), 375–416 (NRDD…GTCR), 418–466 (LIDE…RKCR), 468–517 (LINE…RNCT), 519–566 (AINE…RKCV), 614–663 (RANP…RKCV), 665–713 (AVDE…RSCK), 714–760 (KADM…RVCR), 762–810 (VVNE…KNCV), 816–860 (DPPE…GRCV), 861–908 (VINE…RICR), 910–961 (RVNE…RRCI), 963–1012 (AVNE…RICT), 1029–1070 (TDDG…GSCR), 1071–1118 (VYSA…RICK), 1120–1168 (LINE…RQCT), and 1170–1219 (SNNE…RVCT). 51 disulfides stabilise this stretch: C229–C243, C235–C252, C254–C267, C381–C392, C386–C402, C404–C415, C422–C435, C429–C444, C446–C465, C472–C486, C480–C495, C497–C516, C523–C536, C530–C545, C547–C565, C618–C632, C626–C642, C644–C662, C669–C682, C676–C691, C693–C712, C718–C729, C723–C738, C740–C759, C766–C779, C773–C788, C790–C809, C820–C836, C828–C845, C847–C859, C865–C879, C873–C888, C890–C907, C914–C930, C924–C939, C941–C960, C967–C981, C975–C990, C992–C1011, C1033–C1046, C1040–C1055, C1057–C1069, C1075–C1087, C1081–C1096, C1098–C1117, C1124–C1137, C1131–C1146, C1148–C1167, C1174–C1188, C1182–C1197, and C1199–C1218. The N-linked (GlcNAc...) asparagine glycan is linked to N383. N-linked (GlcNAc...) asparagine glycosylation occurs at N515. Residues 1230–1406 (DLVFLIDGSG…DLDTRLRSMI (177 aa)) form the VWFA domain. The N-linked (GlcNAc...) asparagine glycan is linked to N1350. EGF-like domains are found at residues 1421–1466 (SEDV…RVCG), 1466–1510 (GGDL…GFCV), 1521–1562 (HDAN…GQCA), 1563–1608 (YPGS…DICL), 1608–1656 (LKNE…RVCV), 1658–1706 (LQNE…MVCK), 1708–1755 (LVNE…RRCE), 1759–1807 (TNDK…RLCI), 1809–1860 (VIPE…RLCK), 1862–1911 (LQNE…RKCK), 1913–1961 (LINE…RRCL), 1963–2011 (RINE…RICR), 2014–2062 (LVDE…RLCQ), 2068–2112 (PPPE…GSCS), 2113–2160 (IINE…RMCK), 2162–2208 (MVNE…RICK), 2210–2258 (LTNE…RACR), 2260–2308 (LVNE…RVCL), 2310–2358 (FINE…RVCV), 2360–2408 (LVDE…RVCS), 2409–2455 (APEV…RVCV), 2456–2504 (RNNA…RVCE), 2513–2563 (PRHP…RLCV), 2565–2616 (TEPV…RICK), 2618–2666 (LINE…RICS), 2668–2714 (SVNE…HRCS), 2716–2763 (MINE…RICR), 2763–2811 (RLNE…RICI), and 2833–2872 (REFP…GKCQ). 66 cysteine pairs are disulfide-bonded: C1425-C1441, C1433-C1450, C1452-C1465, C1470-C1484, C1478-C1494, C1496-C1509, C1525-C1538, C1532-C1547, C1549-C1561, C1567-C1583, C1575-C1592, C1594-C1607, C1612-C1625, C1619-C1634, C1636-C1655, C1662-C1675, C1669-C1684, C1686-C1705, C1712-C1726, C1720-C1735, C1737-C1754, C1763-C1776, C1770-C1786, C1788-C1806, C1813-C1829, C1821-C1838, C1840-C1859, C1866-C1880, C1873-C1889, C1891-C1910, C1917-C1930, C1924-C1939, C1941-C1960, C1967-C1980, C1974-C1989, C1991-C2010, C2018-C2031, C2025-C2040, C2042-C2061, C2072-C2088, C2080-C2097, C2099-C2111, C2117-C2131, C2125-C2140, C2142-C2159, C2166-C2180, C2174-C2189, C2191-C2207, C2214-C2228, C2222-C2237, C2239-C2257, C2264-C2278, C2272-C2287, C2289-C2307, C2314-C2327, C2321-C2336, C2338-C2357, C2364-C2377, C2371-C2386, C2388-C2407, C2413-C2425, C2419-C2435, C2437-C2454, C2460-C2474, C2468-C2483, and C2485-C2503. Residues 2492–2521 (RSPDSSQRGRVCEPPPPPSPPPRHPCQDPE) are disordered. The segment covering 2504 to 2515 (EPPPPPSPPPRH) has biased composition (pro residues). Intrachain disulfides connect C2517–C2531, C2525–C2541, C2543–C2562, C2569–C2583, C2577–C2594, C2596–C2615, C2622–C2636, C2630–C2645, C2647–C2665, C2672–C2686, C2680–C2695, C2697–C2713, C2720–C2734, C2728–C2743, C2745–C2762, C2767–C2781, C2775–C2790, C2792–C2810, C2837–C2850, C2842–C2856, and C2858–C2871. The region spanning 2873-2999 (EVQETPFELR…GSLRVASDTD (127 aa)) is the SEA 1 domain. A glycan (N-linked (GlcNAc...) asparagine) is linked at N2944. One can recognise an EGF-like 47 domain in the interval 3009 to 3048 (EWGNCGGMSCKEHLKEVCIAGHICGCPDGMKRRDANSECR). 3 disulfides stabilise this stretch: C3013–C3026, C3018–C3032, and C3034–C3047. The SEA 2 domain occupies 3049-3174 (VVESWNVPLW…SELYLNPTQP (126 aa)). Residues N3120 and N3130 are each glycosylated (N-linked (GlcNAc...) asparagine). EGF-like domains are found at residues 3176 to 3220 (PFNP…KKCL), 3224 to 3272 (GFNE…SLCV), and 3272 to 3324 (VLDY…TLCM). 15 cysteine pairs are disulfide-bonded: C3180-C3191, C3185-C3201, C3203-C3219, C3228-C3242, C3236-C3251, C3253-C3271, C3276-C3288, C3282-C3297, C3299-C3323, C3332-C3345, C3339-C3354, C3356-C3372, C3377-C3386, C3380-C3397, and C3399-C3408. N-linked (GlcNAc...) asparagine glycosylation is present at N3285. An EGF-like 51; calcium-binding domain is found at 3328 to 3373 (DVDECALGLNNCSGVAHCIDRAVGYTCKCPDGYIDGNPDEPGRVCG). Residue N3337 is glycosylated (N-linked (GlcNAc...) asparagine; atypical). Residue N3338 is glycosylated (N-linked (GlcNAc...) asparagine). The region spanning 3373 to 3409 (GALLCDLCNAHGDCVHNTATNNITCVCTDGWTGPQCQ) is the EGF-like 52 domain. The N-linked (GlcNAc...) asparagine glycan is linked to N3394. An N-linked (GlcNAc...) asparagine glycan is attached at N3414. A helical membrane pass occupies residues 3418-3438 (VLLILLALLFLLLTLCCLLYF). Residues 3439 to 3767 (CTKCHCFKGR…SQTSTHVTKK (329 aa)) lie on the Cytoplasmic side of the membrane. A disordered region spans residues 3582-3729 (TTTTDEQGNT…EEDVEHSVGD (148 aa)). Polar residues predominate over residues 3588 to 3597 (QGNTIVTTTE). Residues 3630–3665 (QSQSQQQQSMSQGMSQSMSQHATSAGYSSSGMESSA) show a composition bias toward low complexity. Residues 3675-3684 (HTGERERGGS) are compositionally biased toward basic and acidic residues. Residues 3690-3702 (IGRARGMAAASSG) show a composition bias toward low complexity.

Expressed in the hypodermis at the sites of muscle contact, in striated muscles including body wall muscles, the anal sphincter muscles and the junctions between the anal sphincter muscle and rectal cuticle. Also expressed in non-muscle cells including the excretory duct cell and pore cells.

It localises to the cell membrane. It is found in the cell junction. The protein resides in the hemidesmosome. Involved in cell adhesion and required for organ positioning and attachment. At the hypodermal surface, required for attachment of the hypdermermis to the basal cuticle in postembryonic development, possibly through intermediate filaments of the cytoskeleton. The sequence is that of Transmembrane cell adhesion receptor mua-3 from Caenorhabditis elegans.